The primary structure comprises 463 residues: ATP synthase subunit beta (463 aa).

152–159 contacts ATP; it reads GGAGVGKT.

Belongs to the ATPase alpha/beta chains family. In terms of assembly, F-type ATPases have 2 components, CF(1) - the catalytic core - and CF(0) - the membrane proton channel. CF(1) has five subunits: alpha(3), beta(3), gamma(1), delta(1), epsilon(1). CF(0) has three main subunits: a(1), b(2) and c(9-12). The alpha and beta chains form an alternating ring which encloses part of the gamma chain. CF(1) is attached to CF(0) by a central stalk formed by the gamma and epsilon chains, while a peripheral stalk is formed by the delta and b chains.

The protein resides in the cell membrane. It carries out the reaction ATP + H2O + 4 H(+)(in) = ADP + phosphate + 5 H(+)(out). Its function is as follows. Produces ATP from ADP in the presence of a proton gradient across the membrane. The catalytic sites are hosted primarily by the beta subunits. This is ATP synthase subunit beta from Clostridium botulinum (strain Eklund 17B / Type B).